Here is a 212-residue protein sequence, read N- to C-terminus: MVRWSVSAELSRAVAAMGIRDPAVLRAIAEVPRDLFVPPRLRHQAGADQALPIGFGQTISQPFVVAFMTERLHLTGLERVLEVGTGSGYQTAILARLAAEVFSIEIVPELAARARAALLETLHLRNVRLRTGDGAAGWPEAAPFDRVLVTAAAPEVPPALTAQLAPGGRMVVPVGAAPGLQVLRAVDKGNDGVDLSTDLIPVRFVPLTGASG.

S60 is a catalytic residue.

Belongs to the methyltransferase superfamily. L-isoaspartyl/D-aspartyl protein methyltransferase family.

It localises to the cytoplasm. It catalyses the reaction [protein]-L-isoaspartate + S-adenosyl-L-methionine = [protein]-L-isoaspartate alpha-methyl ester + S-adenosyl-L-homocysteine. Its function is as follows. Catalyzes the methyl esterification of L-isoaspartyl residues in peptides and proteins that result from spontaneous decomposition of normal L-aspartyl and L-asparaginyl residues. It plays a role in the repair and/or degradation of damaged proteins. The protein is Protein-L-isoaspartate O-methyltransferase 1 of Anaeromyxobacter sp. (strain Fw109-5).